The sequence spans 293 residues: Elongation factor Ts (293 aa).

The involved in Mg(2+) ion dislocation from EF-Tu stretch occupies residues 80 to 83 (TDFV).

The protein belongs to the EF-Ts family.

It localises to the cytoplasm. Its function is as follows. Associates with the EF-Tu.GDP complex and induces the exchange of GDP to GTP. It remains bound to the aminoacyl-tRNA.EF-Tu.GTP complex up to the GTP hydrolysis stage on the ribosome. This is Elongation factor Ts from Burkholderia vietnamiensis (strain G4 / LMG 22486) (Burkholderia cepacia (strain R1808)).